The following is a 293-amino-acid chain: Small ribosomal subunit protein uS3 (293 aa).

One can recognise a KH type-2 domain in the interval Ile39–Lys110.

It belongs to the universal ribosomal protein uS3 family. As to quaternary structure, part of the 30S ribosomal subunit. Forms a tight complex with proteins S10 and S14.

Its function is as follows. Binds the lower part of the 30S subunit head. Binds mRNA in the 70S ribosome, positioning it for translation. This Borreliella burgdorferi (strain ATCC 35210 / DSM 4680 / CIP 102532 / B31) (Borrelia burgdorferi) protein is Small ribosomal subunit protein uS3.